Here is a 563-residue protein sequence, read N- to C-terminus: Pre-hexon-linking protein IIIa (563 aa).

Residues 1–117 form a peripentonal hexon-tethering domain region; the sequence is MRKRRTLTAP…ALLHRVSKYN (117 aa). The interval 148-261 is binding to hexon-linking protein; the sequence is GSLTALNSFL…FTDSVSISRD (114 aa). S235 carries the phosphoserine; by host modification. The residue at position 284 (T284) is a Phosphothreonine; by host. The tract at residues 449–472 is disordered; the sequence is RTESRSVSRVPTPASSRRSSVAMA. A phosphoserine; by host mark is found at S452 and S456. Over residues 462-472 the composition is skewed to low complexity; the sequence is ASSRRSSVAMA. Residues S475 and S486 each carry the phosphoserine; by host modification. The tract at residues 522–543 is disordered; sequence KYSSAISSDESDDGMSKPDKFL. A propeptide spanning residues 549 to 563 is cleaved from the precursor; sequence GNPFAHLRPKLGRCL.

This sequence belongs to the adenoviridae hexon-linking protein IIIa family. Interacts with hexon proteins; this interaction tethers the peripentonal hexons to hexons situated in the facet. Interacts with the penton protein (via N-terminus). Interacts with packaging protein 3; this interaction is required to promote correct genome packaging. In terms of processing, cleaved near the C-terminus by the viral protease during virion maturation to form the mature protein.

The protein resides in the virion. It is found in the host nucleus. In terms of biological role, structural component of the virion that acts as a cement protein on the capsid exterior which mediates the interactions between the hexons, including the peripentonal hexons, and reaches all the way to the penton vertices. Two hexon linking proteins IIIa, one from each facet, stabilize the unique edge interface between a pair of facets. As the virus enters the host cell, hexon linking proteins IIIa are shed concomitant with virion acidification in the endosome. During virus assembly, seems to play a role in the serotype specificity of the packaging of viral DNA via its interaction with packaging protein 3. The chain is Pre-hexon-linking protein IIIa from Canis lupus familiaris (Dog).